The following is a 374-amino-acid chain: Putative phosphoserine aminotransferase (374 aa).

L-glutamate is bound at residue Arg-48. Pyridoxal 5'-phosphate-binding positions include 82–83 (AT), Phe-106, Thr-152, Asp-174, and Gln-197. An N6-(pyridoxal phosphate)lysine modification is found at Lys-198. 249 to 250 (NT) is a pyridoxal 5'-phosphate binding site.

This sequence belongs to the class-V pyridoxal-phosphate-dependent aminotransferase family. SerC subfamily. Homodimer. The cofactor is pyridoxal 5'-phosphate.

It localises to the cytoplasm. It catalyses the reaction O-phospho-L-serine + 2-oxoglutarate = 3-phosphooxypyruvate + L-glutamate. It carries out the reaction 4-(phosphooxy)-L-threonine + 2-oxoglutarate = (R)-3-hydroxy-2-oxo-4-phosphooxybutanoate + L-glutamate. Its pathway is amino-acid biosynthesis; L-serine biosynthesis; L-serine from 3-phospho-D-glycerate: step 2/3. The protein operates within cofactor biosynthesis; pyridoxine 5'-phosphate biosynthesis; pyridoxine 5'-phosphate from D-erythrose 4-phosphate: step 3/5. Catalyzes the reversible conversion of 3-phosphohydroxypyruvate to phosphoserine and of 3-hydroxy-2-oxo-4-phosphonooxybutanoate to phosphohydroxythreonine. This chain is Putative phosphoserine aminotransferase, found in Mycolicibacterium paratuberculosis (strain ATCC BAA-968 / K-10) (Mycobacterium paratuberculosis).